The primary structure comprises 232 residues: Large ribosomal subunit protein uL1 (232 aa).

The protein belongs to the universal ribosomal protein uL1 family. Part of the 50S ribosomal subunit.

Functionally, binds directly to 23S rRNA. The L1 stalk is quite mobile in the ribosome, and is involved in E site tRNA release. In terms of biological role, protein L1 is also a translational repressor protein, it controls the translation of the L11 operon by binding to its mRNA. This Ruegeria pomeroyi (strain ATCC 700808 / DSM 15171 / DSS-3) (Silicibacter pomeroyi) protein is Large ribosomal subunit protein uL1.